The primary structure comprises 218 residues: uncharacterized protein (218 aa).

This sequence belongs to the mimivirus L6/L7/L57 family.

This is an uncharacterized protein from Acanthamoeba polyphaga mimivirus (APMV).